A 113-amino-acid chain; its full sequence is UPF0482 protein YnfB (113 aa).

The N-terminal stretch at 1 to 28 (MNNTLSKRLCLTAMLTLAAVVYTTSAFA) is a signal peptide.

It belongs to the UPF0482 family.

This chain is UPF0482 protein YnfB, found in Salmonella agona (strain SL483).